The following is a 352-amino-acid chain: Phenylalanine--tRNA ligase alpha subunit (352 aa).

Residue Glu-258 coordinates Mg(2+).

The protein belongs to the class-II aminoacyl-tRNA synthetase family. Phe-tRNA synthetase alpha subunit type 1 subfamily. In terms of assembly, tetramer of two alpha and two beta subunits. It depends on Mg(2+) as a cofactor.

The protein resides in the cytoplasm. The enzyme catalyses tRNA(Phe) + L-phenylalanine + ATP = L-phenylalanyl-tRNA(Phe) + AMP + diphosphate + H(+). The sequence is that of Phenylalanine--tRNA ligase alpha subunit from Staphylococcus saprophyticus subsp. saprophyticus (strain ATCC 15305 / DSM 20229 / NCIMB 8711 / NCTC 7292 / S-41).